The chain runs to 603 residues: Pyruvate oxidase (603 aa).

The core stretch occupies residues 1–191 (MVMKQTKQTN…WYASANSYQT (191 aa)). Residues 192 to 342 (PLLPEPDVQA…ILAQVSERES (151 aa)) form an FAD-binding region. The tract at residues 343-603 (TPWWQANLAN…LQHQIGQGGF (261 aa)) is thiamine pyrophosphate binding. Mg(2+)-binding residues include aspartate 447, asparagine 474, and glutamine 476.

This sequence belongs to the TPP enzyme family. As to quaternary structure, homotetramer. It depends on FAD as a cofactor. Mg(2+) is required as a cofactor. Thiamine diphosphate serves as cofactor.

The catalysed reaction is pyruvate + phosphate + O2 + H(+) = acetyl phosphate + H2O2 + CO2. Functionally, important for the aerobic growth. Decarboxylates pyruvate in four steps. The energy released is partially stored in acetyl phosphate. In Lactiplantibacillus plantarum (strain ATCC BAA-793 / NCIMB 8826 / WCFS1) (Lactobacillus plantarum), this protein is Pyruvate oxidase (pox5).